The primary structure comprises 179 residues: MEGEELIYHNIINEILVGYIKYYMNDISEHELSPYQQQIKKILTYYDECLNKQVTITFSLTNAQEIKTQFTGVVTELFKDLINWGRICGFIVFSARMAKYCKDANNHLESTVITTAYNFMKHNLLPWMISHGGQEEFLAFSLHSDIYSVIFNIKYFLSKFCNHMFLRSCVQLLRNCNLI.

Positions 76–95 (ELFKDLINWGRICGFIVFSA) match the BH1 motif. Positions 126-141 (PWMISHGGQEEFLAFS) match the BH2 motif.

This sequence belongs to the Bcl-2 family. As to quaternary structure, interacts with host BECN1 (via BH3 homology domain); this interaction allows the virus to inhibit BECN1, and thus autophagy. Interacts with host BID. Interacts with host BAX.

The protein resides in the host mitochondrion. It is found in the host endoplasmic reticulum. Its function is as follows. Suppresses apoptosis in host cell to promote the viral replication. Has the ability to potentially bind to all the members of the proapoptotic Bcl-2 family. Inhibits autophagy by interacting with host Beclin 1 (BECN1). This Ornithodoros (relapsing fever ticks) protein is Apoptosis regulator Bcl-2 homolog.